The chain runs to 481 residues: Subtilisin-like protease 1 (481 aa).

A signal peptide spans 1–19 (MGVFRFISISLAAVSAANA). Residues 20–116 (AQILSMPHAQ…VEPDTIISVH (97 aa)) constitute a propeptide that is removed on maturation. The 82-residue stretch at 34–115 (SYIVMMKDDT…FVEPDTIISV (82 aa)) folds into the Inhibitor I9 domain. In terms of domain architecture, Peptidase S8 spans 126-400 (SWGLARISSS…NVLINNGGAK (275 aa)). Catalysis depends on charge relay system residues aspartate 158 and histidine 190. The disordered stretch occupies residues 175–198 (GSNQVNDGDDNDRSGHGTHTSGTM). An N-linked (GlcNAc...) asparagine glycan is attached at asparagine 251. Positions 281–312 (GNDNTDARSSSPASEPSVCTVGASAEDDSRSS) are disordered. Residues 282 to 294 (NDNTDARSSSPAS) show a composition bias toward polar residues. The Charge relay system role is filled by serine 345. Residues 379-455 (ASISDVGPGT…HPHTPFPGGD (77 aa)) are disordered. A compositionally biased stretch (pro residues) spans 424–450 (PQQPAPGEPSTPAPAPMPPTPQHPHTP).

This sequence belongs to the peptidase S8 family.

Its subcellular location is the secreted. Functionally, secreted subtilisin-like serine protease with keratinolytic activity that contributes to pathogenicity. This is Subtilisin-like protease 1 (SUB1) from Arthroderma gypseum (strain ATCC MYA-4604 / CBS 118893) (Microsporum gypseum).